Reading from the N-terminus, the 937-residue chain is Isoleucine--tRNA ligase (937 aa).

Residues 57–67 (PYANGPIHMGH) carry the 'HIGH' region motif. Residue Glu-556 participates in L-isoleucyl-5'-AMP binding. The short motif at 597 to 601 (KMSKS) is the 'KMSKS' region element. An ATP-binding site is contributed by Lys-600. Residues Cys-895, Cys-898, Cys-915, and Cys-918 each contribute to the Zn(2+) site.

This sequence belongs to the class-I aminoacyl-tRNA synthetase family. IleS type 1 subfamily. In terms of assembly, monomer. Requires Zn(2+) as cofactor.

Its subcellular location is the cytoplasm. It catalyses the reaction tRNA(Ile) + L-isoleucine + ATP = L-isoleucyl-tRNA(Ile) + AMP + diphosphate. In terms of biological role, catalyzes the attachment of isoleucine to tRNA(Ile). As IleRS can inadvertently accommodate and process structurally similar amino acids such as valine, to avoid such errors it has two additional distinct tRNA(Ile)-dependent editing activities. One activity is designated as 'pretransfer' editing and involves the hydrolysis of activated Val-AMP. The other activity is designated 'posttransfer' editing and involves deacylation of mischarged Val-tRNA(Ile). The sequence is that of Isoleucine--tRNA ligase from Levilactobacillus brevis (strain ATCC 367 / BCRC 12310 / CIP 105137 / JCM 1170 / LMG 11437 / NCIMB 947 / NCTC 947) (Lactobacillus brevis).